Here is a 91-residue protein sequence, read N- to C-terminus: Probable Fe(2+)-trafficking protein (91 aa).

The protein belongs to the Fe(2+)-trafficking protein family.

Could be a mediator in iron transactions between iron acquisition and iron-requiring processes, such as synthesis and/or repair of Fe-S clusters in biosynthetic enzymes. The polypeptide is Probable Fe(2+)-trafficking protein (Acidobacterium capsulatum (strain ATCC 51196 / DSM 11244 / BCRC 80197 / JCM 7670 / NBRC 15755 / NCIMB 13165 / 161)).